The primary structure comprises 216 residues: uncharacterized protein (216 aa).

This is an uncharacterized protein from Archaeoglobus fulgidus (strain ATCC 49558 / DSM 4304 / JCM 9628 / NBRC 100126 / VC-16).